A 194-amino-acid polypeptide reads, in one-letter code: FMN-dependent NADH:quinone oxidoreductase (194 aa).

FMN-binding positions include serine 9, 15 to 17, and 85 to 88; these read SIS and MYNF.

It belongs to the azoreductase type 1 family. Homodimer. The cofactor is FMN.

The catalysed reaction is 2 a quinone + NADH + H(+) = 2 a 1,4-benzosemiquinone + NAD(+). It carries out the reaction N,N-dimethyl-1,4-phenylenediamine + anthranilate + 2 NAD(+) = 2-(4-dimethylaminophenyl)diazenylbenzoate + 2 NADH + 2 H(+). Quinone reductase that provides resistance to thiol-specific stress caused by electrophilic quinones. Its function is as follows. Also exhibits azoreductase activity. Catalyzes the reductive cleavage of the azo bond in aromatic azo compounds to the corresponding amines. This is FMN-dependent NADH:quinone oxidoreductase from Xanthomonas oryzae pv. oryzae (strain MAFF 311018).